A 599-amino-acid polypeptide reads, in one-letter code: uncharacterized protein (599 aa).

Residues 1-10 (MEQQSENVYF) show a composition bias toward polar residues. Residues 1–146 (MEQQSENVYF…EPSFTLTELP (146 aa)) are disordered. Low complexity predominate over residues 11–20 (SGSESESLSD). Over residues 24 to 44 (RAQPQNQNSDNSRSASLTPPD) the composition is skewed to polar residues. 2 stretches are compositionally biased toward acidic residues: residues 46–56 (SDLEDYVDSDS) and 89–114 (NGSDDDSEDEDESNDEQDLVESEEED). Residues 118 to 127 (RSSSRSAMDI) show a composition bias toward low complexity. Over residues 128–138 (SSEEDSGDDEP) the composition is skewed to acidic residues.

The protein belongs to the IIV-6 229L family.

This is an uncharacterized protein from Aedes vexans (Inland floodwater mosquito).